The following is a 144-amino-acid chain: Acidic phospholipase A2 (144 aa).

A signal peptide spans Met1–Ala19. A propeptide spanning residues Ser20 to Leu27 is cleaved from the precursor. Disulfide bonds link Cys38/Cys98, Cys54/Cys143, Cys56/Cys72, Cys71/Cys125, Cys78/Cys118, Cys87/Cys111, and Cys105/Cys116. Positions 55, 57, and 59 each coordinate Ca(2+). Residue His75 is part of the active site. Asp76 lines the Ca(2+) pocket. The active site involves Asp119.

The protein belongs to the phospholipase A2 family. Group I subfamily. D49 sub-subfamily. Requires Ca(2+) as cofactor. Expressed by the venom gland.

The protein resides in the secreted. It catalyses the reaction a 1,2-diacyl-sn-glycero-3-phosphocholine + H2O = a 1-acyl-sn-glycero-3-phosphocholine + a fatty acid + H(+). PLA2 catalyzes the calcium-dependent hydrolysis of the 2-acyl groups in 3-sn-phosphoglycerides. This Aipysurus laevis (Olive sea snake) protein is Acidic phospholipase A2.